Consider the following 353-residue polypeptide: 3-ketosteroid-9-alpha-monooxygenase, ferredoxin reductase component (353 aa).

Residues 8–117 enclose the FAD-binding FR-type domain; sequence SHVLELQVAE…LAPSGTFVPK (110 aa). The 90-residue stretch at 264–353 folds into the 2Fe-2S ferredoxin-type domain; it reads ATAVVTLDGT…SDSVEVTYDE (90 aa). Cys300, Cys305, Cys308, and Cys338 together coordinate [2Fe-2S] cluster.

As to quaternary structure, monomer. The two-component system 3-ketosteroid-9-alpha-monooxygenase is composed of an oxygenase component KshA and a reductase component KshB. FAD is required as a cofactor. It depends on [2Fe-2S] cluster as a cofactor.

The catalysed reaction is androsta-1,4-diene-3,17-dione + 2 reduced [2Fe-2S]-[ferredoxin] + O2 + 2 H(+) = 9alpha-hydroxyandrosta-1,4-diene-3,17-dione + 2 oxidized [2Fe-2S]-[ferredoxin] + H2O. Its pathway is lipid metabolism; steroid biosynthesis. In terms of biological role, involved in the degradation of cholesterol. Catalyzes the introduction of a 9a-hydroxyl moiety into 1,4-androstadiene-3,17-dione (ADD) to yield the 9alpha-hydroxy-1,4-androstadiene-3,17-dione (9OHADD) intermediate which spontaneously form 3-hydroxy-9,10-seconandrost-1,3,5(10)-triene-9,17-dione (HSA) via the meta-cleavage of ring B with concomitant aromatization of ring A. In Mycolicibacterium smegmatis (strain ATCC 700084 / mc(2)155) (Mycobacterium smegmatis), this protein is 3-ketosteroid-9-alpha-monooxygenase, ferredoxin reductase component (kshB).